A 459-amino-acid polypeptide reads, in one-letter code: N,N-dimethyl phenylurea N-demethylase subunit alpha (459 aa).

Residues 55 to 166 (WVFVAHETEI…VESYHGFIFT (112 aa)) form the Rieske domain. Residues C97, H99, C117, and H120 each coordinate [2Fe-2S] cluster. Fe cation contacts are provided by H225, H230, and D386.

The protein belongs to the bacterial ring-hydroxylating dioxygenase alpha subunit family. In terms of assembly, pdmA (subunit alpha) and PdmB (subunit beta) form the oxygenase component of a bacterial Rieske non-heme iron oxygenase (RO) system. [2Fe-2S] cluster is required as a cofactor. Fe cation serves as cofactor.

It catalyses the reaction a 1,1-dimethyl-3-phenylurea + 2 reduced [2Fe-2S]-[ferredoxin] + O2 + 2 H(+) = a 1-methyl-3-phenylurea + formaldehyde + 2 oxidized [2Fe-2S]-[ferredoxin] + H2O. It carries out the reaction isoproturon + 2 reduced [2Fe-2S]-[ferredoxin] + O2 + 2 H(+) = 1-methyl-3-[4-(propan-2-yl)phenyl]urea + formaldehyde + 2 oxidized [2Fe-2S]-[ferredoxin] + H2O. The catalysed reaction is chlorotoluron + 2 reduced [2Fe-2S]-[ferredoxin] + O2 + 2 H(+) = 3-(3-chloro-4-methylphenyl)-1-methylurea + formaldehyde + 2 oxidized [2Fe-2S]-[ferredoxin] + H2O. The enzyme catalyses metoxuron + 2 reduced [2Fe-2S]-[ferredoxin] + O2 + 2 H(+) = 3-(3-chloro-4-methoxylphenyl)-1-methylurea + formaldehyde + 2 oxidized [2Fe-2S]-[ferredoxin] + H2O. It catalyses the reaction monuron + 2 reduced [2Fe-2S]-[ferredoxin] + O2 + 2 H(+) = 3-(4-chlorophenyl)-1-methylurea + formaldehyde + 2 oxidized [2Fe-2S]-[ferredoxin] + H2O. It carries out the reaction diuron + 2 reduced [2Fe-2S]-[ferredoxin] + O2 + 2 H(+) = 3-(3,4-dichlorophenyl)-1-methylurea + formaldehyde + 2 oxidized [2Fe-2S]-[ferredoxin] + H2O. The catalysed reaction is fluometuron + 2 reduced [2Fe-2S]-[ferredoxin] + O2 + 2 H(+) = 3-[3-(trifluoromethyl)phenyl]-1-methylurea + formaldehyde + 2 oxidized [2Fe-2S]-[ferredoxin] + H2O. The enzyme catalyses fenuron + 2 reduced [2Fe-2S]-[ferredoxin] + O2 + 2 H(+) = 1-methyl-3-phenylurea + formaldehyde + 2 oxidized [2Fe-2S]-[ferredoxin] + H2O. The protein operates within xenobiotic degradation. Its activity is regulated as follows. Activity is stimulated in vitro by coexpression of a [3Fe-4S]-type ferredoxin. Part of the multicomponent N,N-dimethyl phenylurea N-demethylase responsible for the initial N-demethylation step during the bacterial metabolism of N,N-dimethyl-substituted phenylurea herbicides. Catalyzes the mono-N-demethylation of N,N-dimethyl-substituted phenylurea herbicides to their mono-N-demethylated derivatives. Is active on isoproturon (IPU), chlorotoluron, metoxuron, monoron, diuron, fluometuron and fenuron, but cannot transform the N-methoxy-N-methyl-substituted herbicides. This chain is N,N-dimethyl phenylurea N-demethylase subunit alpha, found in Sphingobium sp. (strain YBL2).